We begin with the raw amino-acid sequence, 502 residues long: Mannitol 2-dehydrogenase (502 aa).

NAD(+) is bound at residue 37–48 (IVHIGVGGFHRA).

The protein belongs to the mannitol dehydrogenase family. In terms of assembly, monomer.

It carries out the reaction D-mannitol + NAD(+) = D-fructose + NADH + H(+). Catalyzes the NAD(H)-dependent interconversion of D-fructose and D-mannitol in the mannitol metabolic pathway. The polypeptide is Mannitol 2-dehydrogenase (Emericella nidulans (strain FGSC A4 / ATCC 38163 / CBS 112.46 / NRRL 194 / M139) (Aspergillus nidulans)).